The primary structure comprises 78 residues: uncharacterized protein (78 aa).

Residues 58 to 78 (EANDPEKKIPSTAAKAISLSP) form a disordered region.

This is an uncharacterized protein from Vaccinia virus (strain Copenhagen) (VACV).